Reading from the N-terminus, the 180-residue chain is Kappa-casein (180 aa).

The N-terminal stretch at 1 to 21 (MMKHFLLVVNILAVTLPFLAA) is a signal peptide. O-linked (GalNAc...) threonine glycosylation is found at Thr132, Thr142, Thr147, and Thr153. At Ser160 the chain carries Phosphoserine; alternate. The O-linked (GalNAc...) serine; alternate glycan is linked to Ser160.

Belongs to the kappa-casein family. Mammary gland specific. Secreted in milk.

Its subcellular location is the secreted. Functionally, kappa-casein stabilizes micelle formation, preventing casein precipitation in milk. This chain is Kappa-casein (CSN3), found in Oryctolagus cuniculus (Rabbit).